An 845-amino-acid chain; its full sequence is Dynein axonemal assembly factor 5 (845 aa).

HEAT repeat units lie at residues 47 to 84 (DVFD…SLPP), 138 to 175 (ECYP…LADT), 180 to 217 (PFTE…HMDA), 260 to 297 (SFFE…QYFN), 332 to 369 (QRSL…HAEA), 523 to 561 (NFGQ…LDAA), 674 to 715 (SESV…MSVE), and 766 to 803 (AIVK…SHPE).

This sequence belongs to the DNAAF5 family. Expressed in testis.

The protein localises to the cytoplasm. Its subcellular location is the dynein axonemal particle. Functionally, cytoplasmic protein involved in the delivery of the dynein machinery to the motile cilium. It is required for the assembly of the axonemal dynein inner and outer arms, two structures attached to the peripheral outer doublet A microtubule of the axoneme, that play a crucial role in cilium motility. This Drosophila melanogaster (Fruit fly) protein is Dynein axonemal assembly factor 5.